Consider the following 346-residue polypeptide: UDP-N-acetylenolpyruvoylglucosamine reductase (346 aa).

In terms of domain architecture, FAD-binding PCMH-type spans 18–189 (LRAQARAFIA…VSVVFALKTH (172 aa)). Residue Arg165 is part of the active site. The Proton donor role is filled by Ser240. Residue Glu336 is part of the active site.

It belongs to the MurB family. Requires FAD as cofactor.

It localises to the cytoplasm. The catalysed reaction is UDP-N-acetyl-alpha-D-muramate + NADP(+) = UDP-N-acetyl-3-O-(1-carboxyvinyl)-alpha-D-glucosamine + NADPH + H(+). It participates in cell wall biogenesis; peptidoglycan biosynthesis. In terms of biological role, cell wall formation. In Neisseria meningitidis serogroup C (strain 053442), this protein is UDP-N-acetylenolpyruvoylglucosamine reductase.